Reading from the N-terminus, the 435-residue chain is Galactomannan galactosyltransferase 1 (435 aa).

The Cytoplasmic portion of the chain corresponds to 1 to 20 (MAKFGSRNKSPKWISNGCCF). The helical; Signal-anchor for type II membrane protein transmembrane segment at 21–41 (LLGAFTALLLLWGLCSFIIPI) threads the bilayer. The Lumenal portion of the chain corresponds to 42-435 (PNTDPKLNSV…SPLPFGYPAA (394 aa)). N-linked (GlcNAc...) asparagine glycans are attached at residues Asn230 and Asn328. Residues 321–354 (EIVKTYENISERYDEVERKVEGLRRRHAEKVSEK) adopt a coiled-coil conformation.

It belongs to the glycosyltransferase 34 family.

It localises to the golgi apparatus membrane. In terms of biological role, galactomannan galactosyltransferase (GMGT) involved in galactomannan biosynthesis in seed endosperm. GMGT specificity is an important factor regulating the distribution and amount of alpha-1,6-galactose (Gal) substitution of the beta-1,4-linked mannan backbone. The sequence is that of Galactomannan galactosyltransferase 1 (GMGT1) from Cyamopsis tetragonoloba (Guar).